Consider the following 247-residue polypeptide: NAD(P)H-quinone oxidoreductase subunit K, chloroplastic (247 aa).

[4Fe-4S] cluster contacts are provided by Cys-61, Cys-62, Cys-126, and Cys-157.

This sequence belongs to the complex I 20 kDa subunit family. As to quaternary structure, NDH is composed of at least 16 different subunits, 5 of which are encoded in the nucleus. [4Fe-4S] cluster serves as cofactor.

The protein localises to the plastid. It localises to the chloroplast thylakoid membrane. The catalysed reaction is a plastoquinone + NADH + (n+1) H(+)(in) = a plastoquinol + NAD(+) + n H(+)(out). The enzyme catalyses a plastoquinone + NADPH + (n+1) H(+)(in) = a plastoquinol + NADP(+) + n H(+)(out). NDH shuttles electrons from NAD(P)H:plastoquinone, via FMN and iron-sulfur (Fe-S) centers, to quinones in the photosynthetic chain and possibly in a chloroplast respiratory chain. The immediate electron acceptor for the enzyme in this species is believed to be plastoquinone. Couples the redox reaction to proton translocation, and thus conserves the redox energy in a proton gradient. The polypeptide is NAD(P)H-quinone oxidoreductase subunit K, chloroplastic (Anthoceros angustus (Hornwort)).